A 480-amino-acid chain; its full sequence is MDHAAWLNEETGEAAQEAYKYFMRPDPNQREFLGPIEEEDDPLTGMRAKFRMAKVGMVRNAKDEDKKEVKVYLGFNDVTYLPHIRIPNAKPLQGWYQDKHNDKRGSRARPCFSEAILTEPYGGYCTVGCAFCYVNSGFRGYRGTGLISVPVNYGEQVRNMLSKSRTSAAGYFSSFTDPFLPIEDVYHNTQQGAEAFVELGLPIFFLSRLSYPSWAIDLLKRNPYSYAQKSLNTGNDRDWHKLSPGAISLQDHIDEIAELRRQGIYTSIQVNPVVPGIVTHDDIRHLFERLAAVGNNHVIVKFVEAGYSWAPAMIERLHKRFGPERTKAFTDLFTENQAGAQKTIAEPYRVEAHQLYRKWATELGMTYATCYEYRRGKPGTGEPAWLSMGREMITADQCHGQRVPMFTRTDLDQPFQEVKECAPTGCLHCADDNEGKPRCGSELFGAAKALRSPDFKKIVEPTPPEEDGGERKIIPITQID.

3 residues coordinate iron-sulfur cluster: Cys-125, Cys-129, and Cys-132. The interval 457–480 is disordered; sequence KIVEPTPPEEDGGERKIIPITQID.

The enzyme catalyses 5-N(alpha)-glycyl-dTMP in DNA + AH2 + S-adenosyl-L-methionine = 5-C(alpha)-glycyl-dTMP in DNA + 5'-deoxyadenosine + L-methionine + A + H(+). Functionally, isomerizes 5-N-alpha-glycinylthymidine (Nalpha-GlyT) into 5-Calpha-glycinylthymidine (Calpha-GlyT) as a step in the pathway leading to thymidine hypermodifications in the viral genome. As a final result of the pathway of hypermodification, 5-aminoethyl-2'-deoxyuridine (5-NedU) substitutes for about 30% of thymidines in the viral DNA. These modifications probably prevent degradation of viral genome by the host restriction-modification antiviral defense system. In Pseudomonas phage M6, this protein is Radical SAM Nalpha-GlyT isomerase.